The primary structure comprises 306 residues: Homoserine O-acetyltransferase (306 aa).

Cys142 serves as the catalytic Acyl-thioester intermediate. The substrate site is built by Lys163 and Ser194. Catalysis depends on His237, which acts as the Proton acceptor. Glu239 is a catalytic residue. A substrate-binding site is contributed by Arg251.

This sequence belongs to the MetA family.

It is found in the cytoplasm. It carries out the reaction L-homoserine + acetyl-CoA = O-acetyl-L-homoserine + CoA. Its pathway is amino-acid biosynthesis; L-methionine biosynthesis via de novo pathway; O-acetyl-L-homoserine from L-homoserine: step 1/1. Transfers an acetyl group from acetyl-CoA to L-homoserine, forming acetyl-L-homoserine. This Clostridium tetani (strain Massachusetts / E88) protein is Homoserine O-acetyltransferase.